Consider the following 193-residue polypeptide: Ion-translocating oxidoreductase complex subunit A (193 aa).

A run of 6 helical transmembrane segments spans residues 5 to 25 (LMLF…FLGL), 39 to 59 (LGMG…AWLI), 62 to 82 (FILL…FIIA), 102 to 122 (LLGI…VALL), 134 to 154 (ALYG…FAAI), and 171 to 191 (SIAL…TGLV).

Belongs to the NqrDE/RnfAE family. In terms of assembly, the complex is composed of six subunits: RnfA, RnfB, RnfC, RnfD, RnfE and RnfG.

The protein localises to the cell inner membrane. Part of a membrane-bound complex that couples electron transfer with translocation of ions across the membrane. In Sodalis glossinidius (strain morsitans), this protein is Ion-translocating oxidoreductase complex subunit A.